The following is a 198-amino-acid chain: Protein C4 (198 aa).

The interval 1-36 (MFNPRHPGGEFFGRKHHRRHAPDGRSSSSSSSSSEC) is disordered.

The protein is Protein C4 (C4) of Giardia intestinalis (Giardia lamblia).